Consider the following 345-residue polypeptide: Green-sensitive opsin (345 aa).

Over 1–37 (MENGTEGKNFYIPMNNRTGLVRSPYEYPQYYLADPWQ) the chain is Extracellular. N-linked (GlcNAc...) asparagine glycans are attached at residues Asn3 and Asn16. A helical membrane pass occupies residues 38-62 (FKLLGIYMFFLILTGFPINALTLVV). Topologically, residues 63-74 (TAQNKKLRQPLN) are cytoplasmic. The helical transmembrane segment at 75–100 (FILVNLAVAGLIMVCFGFTVCIYSCM) threads the bilayer. Residues 101 to 114 (VGYFSLGPLGCTIE) lie on the Extracellular side of the membrane. A disulfide bridge connects residues Cys111 and Cys188. Residues 115-134 (GFMATLGGQVSLWSLVVLAI) traverse the membrane as a helical segment. Topologically, residues 135–153 (ERYIVVCKPMGSFKFTATH) are cytoplasmic. Residues 154-177 (SAAGCAFTWIMASSCAVPPLVGWS) traverse the membrane as a helical segment. The Extracellular portion of the chain corresponds to 178 to 203 (RYIPEGIQVSCGPDYYTLAPGFNNES). Asn201 carries N-linked (GlcNAc...) asparagine glycosylation. Residues 204–231 (FVMYMFSCHFCVPVFTIFFTYGSLVMTV) traverse the membrane as a helical segment. The Cytoplasmic segment spans residues 232-253 (KAAAAQQQDSASTQKAEKEVTR). The helical transmembrane segment at 254-277 (MCFLMVLGFLLAWVPYASYAAWIF) threads the bilayer. Residues 278–285 (FNRGAAFS) lie on the Extracellular side of the membrane. The chain crosses the membrane as a helical span at residues 286–310 (AMSMAIPSFFSKSSALFNPIIYILL). Lys297 carries the post-translational modification N6-(retinylidene)lysine. The Cytoplasmic portion of the chain corresponds to 311 to 345 (NKQFRNCMLATIGMGGMVEDETSVSTSKTEVSTAA).

The protein belongs to the G-protein coupled receptor 1 family. Opsin subfamily. In terms of processing, phosphorylated on some or all of the serine and threonine residues present in the C-terminal region. In terms of tissue distribution, the color pigments are found in the cone photoreceptor cells.

The protein resides in the membrane. In terms of biological role, visual pigments are the light-absorbing molecules that mediate vision. They consist of an apoprotein, opsin, covalently linked to cis-retinal. This Oryzias latipes (Japanese rice fish) protein is Green-sensitive opsin.